We begin with the raw amino-acid sequence, 356 residues long: tRNA-specific 2-thiouridylase MnmA (356 aa).

ATP-binding positions include 6–13 and L32; that span reads AMSGGVDS. C101 serves as the catalytic Nucleophile. C101 and C193 are oxidised to a cystine. G125 contributes to the ATP binding site. The segment at 143–145 is interaction with tRNA; sequence KDQ. C193 acts as the Cysteine persulfide intermediate in catalysis.

It belongs to the MnmA/TRMU family.

It localises to the cytoplasm. The catalysed reaction is S-sulfanyl-L-cysteinyl-[protein] + uridine(34) in tRNA + AH2 + ATP = 2-thiouridine(34) in tRNA + L-cysteinyl-[protein] + A + AMP + diphosphate + H(+). In terms of biological role, catalyzes the 2-thiolation of uridine at the wobble position (U34) of tRNA, leading to the formation of s(2)U34. The polypeptide is tRNA-specific 2-thiouridylase MnmA (Mycobacteroides abscessus (strain ATCC 19977 / DSM 44196 / CCUG 20993 / CIP 104536 / JCM 13569 / NCTC 13031 / TMC 1543 / L948) (Mycobacterium abscessus)).